The primary structure comprises 524 residues: Cytochrome P450 1A1 (524 aa).

The mitochondrial targeting signal stretch occupies residues 33–44 (WQPRLPKGLKSP). O-linked (GlcNAc) serine glycosylation occurs at serine 71. Substrate is bound at residue phenylalanine 228. Position 461 (cysteine 461) interacts with heme.

Belongs to the cytochrome P450 family. As to quaternary structure, interacts with cytosolic chaperones HSP70 and HSP90; this interaction is required for initial targeting to mitochondria. Interacts (via mitochondrial targeting signal) with TOMM40 (via N-terminus); this interaction is required for translocation across the mitochondrial outer membrane. The cofactor is heme.

The protein resides in the endoplasmic reticulum membrane. It localises to the mitochondrion inner membrane. The protein localises to the microsome membrane. It is found in the cytoplasm. It carries out the reaction an organic molecule + reduced [NADPH--hemoprotein reductase] + O2 = an alcohol + oxidized [NADPH--hemoprotein reductase] + H2O + H(+). It catalyses the reaction estrone + reduced [NADPH--hemoprotein reductase] + O2 = 2-hydroxyestrone + oxidized [NADPH--hemoprotein reductase] + H2O + H(+). The enzyme catalyses estrone + reduced [NADPH--hemoprotein reductase] + O2 = 4-hydroxyestrone + oxidized [NADPH--hemoprotein reductase] + H2O + H(+). The catalysed reaction is estrone + reduced [NADPH--hemoprotein reductase] + O2 = 6alpha-hydroxyestrone + oxidized [NADPH--hemoprotein reductase] + H2O + H(+). It carries out the reaction estrone + reduced [NADPH--hemoprotein reductase] + O2 = 15alpha-hydroxyestrone + oxidized [NADPH--hemoprotein reductase] + H2O + H(+). It catalyses the reaction estrone + reduced [NADPH--hemoprotein reductase] + O2 = 16alpha-hydroxyestrone + oxidized [NADPH--hemoprotein reductase] + H2O + H(+). The enzyme catalyses 17beta-estradiol + reduced [NADPH--hemoprotein reductase] + O2 = 2-hydroxy-17beta-estradiol + oxidized [NADPH--hemoprotein reductase] + H2O + H(+). The catalysed reaction is 17beta-estradiol + reduced [NADPH--hemoprotein reductase] + O2 = 4-hydroxy-17beta-estradiol + oxidized [NADPH--hemoprotein reductase] + H2O + H(+). It carries out the reaction 17beta-estradiol + reduced [NADPH--hemoprotein reductase] + O2 = 6alpha-hydroxy-17beta-estradiol + oxidized [NADPH--hemoprotein reductase] + H2O + H(+). It catalyses the reaction 17beta-estradiol + reduced [NADPH--hemoprotein reductase] + O2 = 7alpha-hydroxy-17beta-estradiol + oxidized [NADPH--hemoprotein reductase] + H2O + H(+). The enzyme catalyses 17beta-estradiol + reduced [NADPH--hemoprotein reductase] + O2 = 15alpha-hydroxy-17beta-estradiol + oxidized [NADPH--hemoprotein reductase] + H2O + H(+). The catalysed reaction is (5Z,8Z,11Z)-eicosatrienoate + reduced [NADPH--hemoprotein reductase] + O2 = 19-hydroxy-(5Z,8Z,11Z)-eicosatrienoate + oxidized [NADPH--hemoprotein reductase] + H2O + H(+). It carries out the reaction (5Z,8Z,11Z,14Z)-eicosatetraenoate + reduced [NADPH--hemoprotein reductase] + O2 = 16-hydroxy-(5Z,8Z,11Z,14Z)-eicosatetraenoate + oxidized [NADPH--hemoprotein reductase] + H2O + H(+). It catalyses the reaction (5Z,8Z,11Z,14Z)-eicosatetraenoate + reduced [NADPH--hemoprotein reductase] + O2 = 17-hydroxy-(5Z,8Z,11Z,14Z)-eicosatetraenoate + oxidized [NADPH--hemoprotein reductase] + H2O + H(+). The enzyme catalyses (5Z,8Z,11Z,14Z)-eicosatetraenoate + reduced [NADPH--hemoprotein reductase] + O2 = 18-hydroxy-(5Z,8Z,11Z,14Z)-eicosatetraenoate + oxidized [NADPH--hemoprotein reductase] + H2O + H(+). The catalysed reaction is (5Z,8Z,11Z,14Z)-eicosatetraenoate + reduced [NADPH--hemoprotein reductase] + O2 = 19-hydroxy-(5Z,8Z,11Z,14Z)-eicosatetraenoate + oxidized [NADPH--hemoprotein reductase] + H2O + H(+). It carries out the reaction (5Z,8Z,11Z,14Z,17Z)-eicosapentaenoate + reduced [NADPH--hemoprotein reductase] + O2 = 19-hydroxy-(5Z,8Z,11Z,14Z,17Z)-eicosapentaenoate + oxidized [NADPH--hemoprotein reductase] + H2O + H(+). It catalyses the reaction (5Z,8Z,11Z,14Z)-eicosatetraenoate + reduced [NADPH--hemoprotein reductase] + O2 = (8R,9S)-epoxy-(5Z,11Z,14Z)-eicosatrienoate + oxidized [NADPH--hemoprotein reductase] + H2O + H(+). The enzyme catalyses (5Z,8Z,11Z,14Z)-eicosatetraenoate + reduced [NADPH--hemoprotein reductase] + O2 = (11R,12S)-epoxy-(5Z,8Z,14Z)-eicosatrienoate + oxidized [NADPH--hemoprotein reductase] + H2O + H(+). The catalysed reaction is (5Z,8Z,11Z,14Z)-eicosatetraenoate + reduced [NADPH--hemoprotein reductase] + O2 = (14S,15R)-epoxy-(5Z,8Z,11Z)-eicosatrienoate + oxidized [NADPH--hemoprotein reductase] + H2O + H(+). It carries out the reaction (5Z,8Z,11Z,14Z)-eicosatetraenoate + reduced [NADPH--hemoprotein reductase] + O2 = (14R,15S)-epoxy-(5Z,8Z,11Z)-eicosatrienoate + oxidized [NADPH--hemoprotein reductase] + H2O + H(+). It catalyses the reaction (5Z,8Z,11Z,14Z,17Z)-eicosapentaenoate + reduced [NADPH--hemoprotein reductase] + O2 = (17R,18S)-epoxy-(5Z,8Z,11Z,14Z)-eicosatetraenoate + oxidized [NADPH--hemoprotein reductase] + H2O + H(+). The enzyme catalyses (4Z,7Z,10Z,13Z,16Z,19Z)-docosahexaenoate + reduced [NADPH--hemoprotein reductase] + O2 = (19S,20R)-epoxy-(4Z,7Z,10Z,13Z,16Z)-docosapentaenoate + oxidized [NADPH--hemoprotein reductase] + H2O + H(+). The catalysed reaction is (4Z,7Z,10Z,13Z,16Z,19Z)-docosahexaenoate + reduced [NADPH--hemoprotein reductase] + O2 = (19R,20S)-epoxy-(4Z,7Z,10Z,13Z,16Z)-docosapentaenoate + oxidized [NADPH--hemoprotein reductase] + H2O + H(+). It carries out the reaction all-trans-retinol + reduced [NADPH--hemoprotein reductase] + O2 = all-trans-retinal + oxidized [NADPH--hemoprotein reductase] + 2 H2O + H(+). It catalyses the reaction all-trans-retinal + reduced [NADPH--hemoprotein reductase] + O2 = all-trans-retinoate + oxidized [NADPH--hemoprotein reductase] + H2O + 2 H(+). The enzyme catalyses (13S)-hydroperoxy-(9Z,11E)-octadecadienoate = 13-oxo-(9Z,11E)-octadecadienoate + H2O. The catalysed reaction is (12S)-hydroperoxy-(5Z,8Z,10E,14Z)-eicosatetraenoate = 12-oxo-(5Z,8Z,10E,14Z)-eicosatetraenoate + H2O. It carries out the reaction (15S)-hydroperoxy-(5Z,8Z,11Z,13E)-eicosatetraenoate = 15-oxo-(5Z,8Z,11Z,13E)-eicosatetraenoate + H2O. It catalyses the reaction (5S)-hydroperoxy-(6E,8Z,11Z,14Z)-eicosatetraenoate = 5-oxo-(6E,8Z,11Z,14Z)-eicosatetraenoate + H2O. It participates in steroid hormone biosynthesis. The protein operates within lipid metabolism; fatty acid metabolism. Its pathway is cofactor metabolism; retinol metabolism. Functionally, a cytochrome P450 monooxygenase involved in the metabolism of various endogenous substrates, including fatty acids, steroid hormones and vitamins. Mechanistically, uses molecular oxygen inserting one oxygen atom into a substrate, and reducing the second into a water molecule, with two electrons provided by NADPH via cytochrome P450 reductase (CPR; NADPH-ferrihemoprotein reductase). Catalyzes the hydroxylation of carbon-hydrogen bonds. Exhibits high catalytic activity for the formation of hydroxyestrogens from estrone (E1) and 17beta-estradiol (E2), namely 2-hydroxy E1 and E2, as well as D-ring hydroxylated E1 and E2 at the C15alpha and C16alpha positions. Displays different regioselectivities for polyunsaturated fatty acids (PUFA) hydroxylation. Catalyzes the epoxidation of double bonds of certain PUFA. Converts arachidonic acid toward epoxyeicosatrienoic acid (EET) regioisomers, 8,9-, 11,12-, and 14,15-EET, that function as lipid mediators in the vascular system. Displays an absolute stereoselectivity in the epoxidation of eicosapentaenoic acid (EPA) producing the 17(R),18(S) enantiomer. May play an important role in all-trans retinoic acid biosynthesis in extrahepatic tissues. Catalyzes two successive oxidative transformation of all-trans retinol to all-trans retinal and then to the active form all-trans retinoic acid. May also participate in eicosanoids metabolism by converting hydroperoxide species into oxo metabolites (lipoxygenase-like reaction, NADPH-independent). The polypeptide is Cytochrome P450 1A1 (CYP1A1) (Canis lupus familiaris (Dog)).